A 328-amino-acid chain; its full sequence is Biotin synthase (328 aa).

Residues 53–282 (FHGNRVDLCA…ATTIRYAGGR (230 aa)) form the Radical SAM core domain. 3 residues coordinate [4Fe-4S] cluster: cysteine 71, cysteine 75, and cysteine 78. Residues serine 115, cysteine 147, cysteine 207, and arginine 277 each coordinate [2Fe-2S] cluster.

It belongs to the radical SAM superfamily. Biotin synthase family. As to quaternary structure, homodimer. [4Fe-4S] cluster is required as a cofactor. Requires [2Fe-2S] cluster as cofactor.

It catalyses the reaction (4R,5S)-dethiobiotin + (sulfur carrier)-SH + 2 reduced [2Fe-2S]-[ferredoxin] + 2 S-adenosyl-L-methionine = (sulfur carrier)-H + biotin + 2 5'-deoxyadenosine + 2 L-methionine + 2 oxidized [2Fe-2S]-[ferredoxin]. It participates in cofactor biosynthesis; biotin biosynthesis; biotin from 7,8-diaminononanoate: step 2/2. In terms of biological role, catalyzes the conversion of dethiobiotin (DTB) to biotin by the insertion of a sulfur atom into dethiobiotin via a radical-based mechanism. The protein is Biotin synthase of Desulforudis audaxviator (strain MP104C).